The primary structure comprises 303 residues: GTPase Era (303 aa).

An Era-type G domain is found at 7-176; sequence KSGFVAIIGR…LDNVVSHLDE (170 aa). Residues 15-22 are G1; the sequence is GRPNVGKS. 15–22 lines the GTP pocket; the sequence is GRPNVGKS. The interval 41–45 is G2; the sequence is QTTRN. A G3 region spans residues 62–65; that stretch reads DTPG. Residues 62–66 and 125–128 each bind GTP; these read DTPGV and NKVD. The tract at residues 125-128 is G4; the sequence is NKVD. The interval 155–157 is G5; the sequence is ISA. Residues 207 to 284 form the KH type-2 domain; it reads TRQEVPHSVA…FLETWVKVEP (78 aa).

The protein belongs to the TRAFAC class TrmE-Era-EngA-EngB-Septin-like GTPase superfamily. Era GTPase family. As to quaternary structure, monomer.

It is found in the cytoplasm. The protein localises to the cell membrane. In terms of biological role, an essential GTPase that binds both GDP and GTP, with rapid nucleotide exchange. Plays a role in 16S rRNA processing and 30S ribosomal subunit biogenesis and possibly also in cell cycle regulation and energy metabolism. This chain is GTPase Era, found in Leuconostoc citreum (strain KM20).